The primary structure comprises 310 residues: Low-salt glycan biosynthesis protein Agl12 (310 aa).

NAD(+) is bound by residues 7–13 (GGAGFIG), 32–35 (DALT), and 58–59 (DI). Ser-82 serves as a coordination point for substrate. Thr-97 is a binding site for NAD(+). Substrate-binding positions include Thr-122 and 122-124 (TDE). Asp-123 (proton donor) is an active-site residue. Active-site proton acceptor residues include Glu-124 and Tyr-146. 146-150 (YSATK) is a binding site for NAD(+). Substrate is bound at residue Asn-175. Position 176 (Asn-176) interacts with NAD(+). Substrate-binding positions include 185 to 186 (KL), 201 to 203 (PVY), Arg-210, Asn-245, and 269 to 272 (RAGH).

The protein belongs to the NAD(P)-dependent epimerase/dehydratase family. dTDP-glucose dehydratase subfamily. NAD(+) serves as cofactor.

Its pathway is protein modification; protein glycosylation. The protein operates within cell surface structure biogenesis; S-layer biogenesis. Lyase involved in N-glycan biosynthetic pathway that takes place under low-salt conditions (1.75 M instead of 3.4 M). Participates in the formation of the tetrasaccharide present at 'Asn-532' of S-layer glycoprotein Csg, consisting of a sulfated hexose, 2 hexoses and rhamnose. Involved in the addition of final rhamnose (sugar 4) of the tetrasaccharide on the dolichol phosphate carrier. The chain is Low-salt glycan biosynthesis protein Agl12 (agl12) from Haloferax volcanii (strain ATCC 29605 / DSM 3757 / JCM 8879 / NBRC 14742 / NCIMB 2012 / VKM B-1768 / DS2) (Halobacterium volcanii).